We begin with the raw amino-acid sequence, 464 residues long: UDP-N-acetylmuramate--L-alanine ligase (464 aa).

117–123 serves as a coordination point for ATP; that stretch reads GTHGKTT.

This sequence belongs to the MurCDEF family.

The protein localises to the cytoplasm. The catalysed reaction is UDP-N-acetyl-alpha-D-muramate + L-alanine + ATP = UDP-N-acetyl-alpha-D-muramoyl-L-alanine + ADP + phosphate + H(+). The protein operates within cell wall biogenesis; peptidoglycan biosynthesis. Cell wall formation. The protein is UDP-N-acetylmuramate--L-alanine ligase of Streptomyces avermitilis (strain ATCC 31267 / DSM 46492 / JCM 5070 / NBRC 14893 / NCIMB 12804 / NRRL 8165 / MA-4680).